The following is a 266-amino-acid chain: Maltodextrose utilization protein MalA (266 aa).

Its function is as follows. Has a role in maltotetraose utilization. In Streptococcus pneumoniae (strain ATCC BAA-255 / R6), this protein is Maltodextrose utilization protein MalA (malA).